The sequence spans 377 residues: RNA polymerase sigma factor SigA (377 aa).

The tract at residues 72–92 (EVSNLRQGEDHDGNDNDDFNF) is disordered. Residues 144 to 214 (LAEANLRLVV…TRAIADQART (71 aa)) are sigma-70 factor domain-2. The Interaction with polymerase core subunit RpoC signature appears at 168–171 (DLIQ). The sigma-70 factor domain-3 stretch occupies residues 223 to 299 (ETINKLIRVS…DQEALTPADA (77 aa)). The tract at residues 312 to 365 (VLDTLTEREENVLRLRFGLDDGRTRTLEEVGKVFGVTRERIRQIEAKALRKLRH) is sigma-70 factor domain-4. The H-T-H motif DNA-binding region spans 338-357 (LEEVGKVFGVTRERIRQIEA).

The protein belongs to the sigma-70 factor family. RpoD/SigA subfamily. Interacts transiently with the RNA polymerase catalytic core.

The protein localises to the cytoplasm. In terms of biological role, sigma factors are initiation factors that promote the attachment of RNA polymerase to specific initiation sites and are then released. This sigma factor is the primary sigma factor during exponential growth. The protein is RNA polymerase sigma factor SigA of Bacillus sp.